A 370-amino-acid polypeptide reads, in one-letter code: Putative agmatine deiminase (370 aa).

Residues 1–19 are compositionally biased toward polar residues; that stretch reads MTNMNVDATQLTTKPSQDG. Residues 1–20 form a disordered region; sequence MTNMNVDATQLTTKPSQDGF. Cys361 serves as the catalytic Amidino-cysteine intermediate.

Belongs to the agmatine deiminase family.

It catalyses the reaction agmatine + H2O = N-carbamoylputrescine + NH4(+). The chain is Putative agmatine deiminase from Shewanella frigidimarina (strain NCIMB 400).